The following is a 443-amino-acid chain: MKPLLALVGRPNVGKSTLFNRILRQRSAIVDPTPGVTRDRHIAEGEWQGKQFKLMDTGGYNTDGDVLSKAMLEQTLHALADADSILFITDARAGLSYEDLELARILQRSFQHKQLFFVVNKVESPQLVIEAESFIKTGFTTPYFVSAKDGSGVADLLDDVLEALPEAPEGEVKGDTAVHLAIVGRPNVGKSSFVNALLGTNRHIVSNIPGTTRDAIDSRLMRNQQEYLLIDTAGLRKRTKIDAGIEYYSSLRSERAIERCEVAIVMLDAEQGIEKQDLKIINMAIERKKGVLLLVNKWDLIEKDSKTSIRYEEQLRMAMGNLSYVPVLFVSAMTKKNLYRALDTALQISRNRSQNVSTSQLNKFLEQTLAQVHPATKSGRELKIKYMTQLKSAWPVFGFFCNDPLLVQSNFRKFLENKLREAYNFEGVPISLRFLHKNKVKED.

EngA-type G domains lie at 3-168 (PLLA…PEAP) and 178-353 (VHLA…RNRS). Residues 9-16 (GRPNVGKS), 56-60 (DTGGY), 120-123 (NKVE), 184-191 (GRPNVGKS), 231-235 (DTAGL), and 296-299 (NKWD) contribute to the GTP site. The 85-residue stretch at 354 to 438 (QNVSTSQLNK…PISLRFLHKN (85 aa)) folds into the KH-like domain.

Belongs to the TRAFAC class TrmE-Era-EngA-EngB-Septin-like GTPase superfamily. EngA (Der) GTPase family. As to quaternary structure, associates with the 50S ribosomal subunit.

GTPase that plays an essential role in the late steps of ribosome biogenesis. This chain is GTPase Der, found in Chlorobium chlorochromatii (strain CaD3).